The sequence spans 400 residues: Probable succinyl-diaminopimelate desuccinylase (400 aa).

Zn(2+) is bound at residue histidine 72. Residue aspartate 74 is part of the active site. Aspartate 105 contributes to the Zn(2+) binding site. The active-site Proton acceptor is the glutamate 139. Residues glutamate 140, glutamate 165, and histidine 378 each contribute to the Zn(2+) site.

The protein belongs to the peptidase M20A family. The cofactor is Zn(2+). Requires Co(2+) as cofactor.

The enzyme catalyses N-succinyl-(2S,6S)-2,6-diaminopimelate + H2O = (2S,6S)-2,6-diaminopimelate + succinate. Its pathway is amino-acid biosynthesis; L-lysine biosynthesis via DAP pathway; LL-2,6-diaminopimelate from (S)-tetrahydrodipicolinate (succinylase route): step 3/3. This chain is Probable succinyl-diaminopimelate desuccinylase (dapE), found in Staphylococcus aureus (strain Mu50 / ATCC 700699).